The chain runs to 325 residues: uncharacterized protein (325 aa).

The helical transmembrane segment at 10-30 threads the bilayer; the sequence is IVFVSLAALVLLVSVSVFIYH. The region spanning 94-166 is the AB hydrolase-1 domain; the sequence is KIAVVDRAGY…EIKAIIAMDI (73 aa).

The protein resides in the cell membrane. This is an uncharacterized protein from Bacillus subtilis (strain 168).